The primary structure comprises 239 residues: Peptidyl-tRNA hydrolase (239 aa).

Tyr-14 is a binding site for tRNA. His-19 serves as the catalytic Proton acceptor. Positions 64, 66, and 112 each coordinate tRNA. The segment at 188-225 is disordered; the sequence is GGKPDAEEPQAPKKQVGQSHIHKARNAAQPKKLPATGP.

This sequence belongs to the PTH family. In terms of assembly, monomer.

It localises to the cytoplasm. The catalysed reaction is an N-acyl-L-alpha-aminoacyl-tRNA + H2O = an N-acyl-L-amino acid + a tRNA + H(+). Functionally, hydrolyzes ribosome-free peptidyl-tRNAs (with 1 or more amino acids incorporated), which drop off the ribosome during protein synthesis, or as a result of ribosome stalling. Its function is as follows. Catalyzes the release of premature peptidyl moieties from peptidyl-tRNA molecules trapped in stalled 50S ribosomal subunits, and thus maintains levels of free tRNAs and 50S ribosomes. This is Peptidyl-tRNA hydrolase from Sinorhizobium fredii (strain NBRC 101917 / NGR234).